The primary structure comprises 815 residues: Echinoderm microtubule-associated protein-like 1 (815 aa).

The stretch at 31-72 (SMEVTDRIASLEQRVQMQEDDIQLLKSALADVVRRLNITEEQ) forms a coiled coil. The tract at residues 77-179 (NRKGPTKARP…NSESKPKEPV (103 aa)) is disordered. Positions 92 to 101 (PLRTTVNNGT) are enriched in polar residues. Position 113 is a phosphoserine (Ser113). Residues 126-138 (TKSNIKRTSSSER) are compositionally biased toward polar residues. The span at 143 to 153 (GRRESNGDSRG) shows a compositional bias: basic and acidic residues. Residues 156 to 168 (NRTGSTSSSSSGK) show a composition bias toward low complexity. The tract at residues 176-815 (KEPVFSAEEG…DTSIMQWRVI (640 aa)) is tandem atypical propeller in EMLs. WD repeat units lie at residues 261-310 (EQLQ…IWDS), 315-358 (TLHV…VWDW), 363-400 (KLAD…FWTL), 409-446 (QGLF…VWGK), 450-489 (RISY…SWSG), 493-530 (KLRK…LQGT), 535-572 (FTPI…LWDA), 578-613 (VWDK…VFDT), 617-655 (DLVT…IYGV), 664-701 (RVGK…YWVP), 709-768 (SVET…LFSY), and 775-814 (APSH…QWRV).

Belongs to the WD repeat EMAP family. In terms of assembly, homotrimer; self-association is mediated by the N-terminal coiled coil. Does not interact with EML3. Binds repolymerizing microtubules. Binds unpolymerized tubulins via its WD repeat region. Interacts with TASOR. Ubiquitous; expressed in most tissues with the exception of thymus and peripheral blood lymphocytes.

Its subcellular location is the cytoplasm. The protein resides in the perinuclear region. It localises to the cytoskeleton. Modulates the assembly and organization of the microtubule cytoskeleton, and probably plays a role in regulating the orientation of the mitotic spindle and the orientation of the plane of cell division. Required for normal proliferation of neuronal progenitor cells in the developing brain and for normal brain development. Does not affect neuron migration per se. The chain is Echinoderm microtubule-associated protein-like 1 (EML1) from Homo sapiens (Human).